We begin with the raw amino-acid sequence, 98 residues long: Feather keratin (98 aa).

Residue A1 is modified to N-acetylalanine.

The protein belongs to the avian keratin family. As to quaternary structure, the avian keratins (F-ker, S-ker, C-ker and B-ker) are a complex mixture of very similar polypeptides.

The protein is Feather keratin of Chroicocephalus novaehollandiae (Silver gull).